A 632-amino-acid chain; its full sequence is Extracellular metalloproteinase 1 (632 aa).

Residues 1–19 (MHGLLLAAGLISLPLHVLA) form the signal peptide. Residues 20-246 (HPQPSSTSLA…VVDYVAHATF (227 aa)) constitute a propeptide that is removed on maturation. N284 carries an N-linked (GlcNAc...) asparagine glycan. T430 contributes to the Zn(2+) binding site. H431 is an active-site residue. S434 provides a ligand contact to Zn(2+). N-linked (GlcNAc...) asparagine glycosylation is present at N591.

The protein belongs to the peptidase M36 family. Requires Zn(2+) as cofactor.

It localises to the secreted. Its activity is regulated as follows. PMSF, soybean trypsin inhibitor (SBTI) and chymostatin strongly inhibit the proteinase. In terms of biological role, secreted metalloproteinase probably acting as a virulence factor. The polypeptide is Extracellular metalloproteinase 1 (MEP1) (Arthroderma otae (Microsporum canis)).